The primary structure comprises 244 residues: Myrosinase MB1 (244 aa).

N-linked (GlcNAc...) asparagine glycosylation occurs at N32. Position 51 (Y51) interacts with substrate. The active-site Nucleophile is the E125. Substrate is bound by residues W173 and 180–181 (EF). N-linked (GlcNAc...) asparagine glycosylation is present at N216.

The protein belongs to the glycosyl hydrolase 1 family. Homodimer. As to expression, in vacuoles called myrosin grains of a certain class of cells, myrosin cells, distributed in the cotyledons and the axis of the embryo as well as in different organs of the growing plant.

It localises to the vacuole. The enzyme catalyses a thioglucoside + H2O = a sugar + a thiol.. Its function is as follows. Degradation of glucosinolates (glucose residue linked by a thioglucoside bound to an amino acid derivative) to glucose, sulfate and any of the products: thiocyanates, isothiocyanates, nitriles, epithionitriles or oxazolidine-2-thiones. This chain is Myrosinase MB1, found in Sinapis alba (White mustard).